Consider the following 166-residue polypeptide: Transcription antitermination protein NusB (166 aa).

This sequence belongs to the NusB family.

Involved in transcription antitermination. Required for transcription of ribosomal RNA (rRNA) genes. Binds specifically to the boxA antiterminator sequence of the ribosomal RNA (rrn) operons. The chain is Transcription antitermination protein NusB from Chromohalobacter salexigens (strain ATCC BAA-138 / DSM 3043 / CIP 106854 / NCIMB 13768 / 1H11).